The chain runs to 162 residues: uncharacterized protein (162 aa).

Residues 6 to 78 enclose the HTH asnC-type domain; that stretch reads LDDLDRNILR…ALIVLEVGKP (73 aa). Positions 25-44 form a DNA-binding region, H-T-H motif; that stretch reads ISELSEQLKKPESTIHFRIK.

This is an uncharacterized protein from Pyrococcus furiosus (strain ATCC 43587 / DSM 3638 / JCM 8422 / Vc1).